We begin with the raw amino-acid sequence, 575 residues long: Alpha-(1,6)-fucosyltransferase (575 aa).

The Cytoplasmic portion of the chain corresponds to 1 to 9 (MRPWTGSWR). A helical; Signal-anchor for type II membrane protein membrane pass occupies residues 10 to 30 (WIMLILFAWGTLLFYIGGHLV). Topologically, residues 31 to 575 (RDNDHPDHSS…KYPTYPEAEK (545 aa)) are lumenal. Cystine bridges form between Cys-204–Cys-266, Cys-212–Cys-230, and Cys-218–Cys-222. The 288-residue stretch at 206–493 (KAKKLVCNIN…PDASANFHSL (288 aa)) folds into the GT23 domain. A Phosphoserine modification is found at Ser-278. The SH3-binding motif lies at 299 to 305 (PRPPYLP). The segment at 365-366 (RR) is important for donor substrate binding. A disulfide bond links Cys-465 and Cys-472. An SH3 domain is found at 502–563 (QNAHNQIAIY…PSYKVREKIE (62 aa)).

This sequence belongs to the glycosyltransferase 23 family. Post-translationally, tyrosine phosphorylated by PKDCC/VLK.

It localises to the golgi apparatus. The protein resides in the golgi stack membrane. The enzyme catalyses N(4)-{beta-D-GlcNAc-(1-&gt;2)-alpha-D-Man-(1-&gt;3)-[beta-D-GlcNAc-(1-&gt;2)-alpha-D-Man-(1-&gt;6)]-beta-D-Man-(1-&gt;4)-beta-D-GlcNAc-(1-&gt;4)-beta-D-GlcNAc}-L-asparaginyl-[protein] + GDP-beta-L-fucose = an N(4)-{beta-D-GlcNAc-(1-&gt;2)-alpha-D-Man-(1-&gt;3)-[beta-D-GlcNAc-(1-&gt;2)-alpha-D-Man-(1-&gt;6)]-beta-D-Man-(1-&gt;4)-beta-D-GlcNAc-(1-&gt;4)-[alpha-L-Fuc-(1-&gt;6)]-beta-D-GlcNAc}-L-asparaginyl-[protein] + GDP + H(+). It functions in the pathway protein modification; protein glycosylation. In terms of biological role, catalyzes the addition of fucose in alpha 1-6 linkage to the first GlcNAc residue, next to the peptide chains in N-glycans. The protein is Alpha-(1,6)-fucosyltransferase (FUT8) of Canis lupus familiaris (Dog).